The following is a 53-amino-acid chain: Photosystem II reaction center protein K (53 aa).

Residues 1–16 (MFYTNVETLLNTNCFA) constitute a propeptide that is removed on maturation. The helical transmembrane segment at 28 to 48 (LVDVLPIIPLLFLLLAFVWQA) threads the bilayer.

Belongs to the PsbK family. PSII is composed of 1 copy each of membrane proteins PsbA, PsbB, PsbC, PsbD, PsbE, PsbF, PsbH, PsbI, PsbJ, PsbK, PsbL, PsbM, PsbT, PsbY, PsbZ, Psb30/Ycf12, at least 3 peripheral proteins of the oxygen-evolving complex and a large number of cofactors. It forms dimeric complexes.

It localises to the plastid. Its subcellular location is the chloroplast thylakoid membrane. Functionally, one of the components of the core complex of photosystem II (PSII). PSII is a light-driven water:plastoquinone oxidoreductase that uses light energy to abstract electrons from H(2)O, generating O(2) and a proton gradient subsequently used for ATP formation. It consists of a core antenna complex that captures photons, and an electron transfer chain that converts photonic excitation into a charge separation. The polypeptide is Photosystem II reaction center protein K (Euglena anabaena (Euglenaria anabaena)).